Here is a 216-residue protein sequence, read N- to C-terminus: Deoxyribose-phosphate aldolase (216 aa).

D89 serves as the catalytic Proton donor/acceptor. The active-site Schiff-base intermediate with acetaldehyde is K153. Catalysis depends on K182, which acts as the Proton donor/acceptor.

Belongs to the DeoC/FbaB aldolase family. DeoC type 1 subfamily.

It is found in the cytoplasm. The enzyme catalyses 2-deoxy-D-ribose 5-phosphate = D-glyceraldehyde 3-phosphate + acetaldehyde. It participates in carbohydrate degradation; 2-deoxy-D-ribose 1-phosphate degradation; D-glyceraldehyde 3-phosphate and acetaldehyde from 2-deoxy-alpha-D-ribose 1-phosphate: step 2/2. In terms of biological role, catalyzes a reversible aldol reaction between acetaldehyde and D-glyceraldehyde 3-phosphate to generate 2-deoxy-D-ribose 5-phosphate. This Treponema denticola (strain ATCC 35405 / DSM 14222 / CIP 103919 / JCM 8153 / KCTC 15104) protein is Deoxyribose-phosphate aldolase.